A 513-amino-acid polypeptide reads, in one-letter code: Maturase K (513 aa).

This sequence belongs to the intron maturase 2 family. MatK subfamily.

It localises to the plastid. The protein localises to the chloroplast. Usually encoded in the trnK tRNA gene intron. Probably assists in splicing its own and other chloroplast group II introns. The chain is Maturase K from Zea mays (Maize).